A 1693-amino-acid polypeptide reads, in one-letter code: Non-structural polyprotein pORF1 (1693 aa).

The Alphavirus-like MT domain occupies 56–240; it reads VFRPEVFWNQ…HDVSNLRSWI (185 aa). The interval 60–240 is methyltransferase; that stretch reads EVFWNQPIQR…HDVSNLRSWI (181 aa). The segment at 241–439 is Y-domain; that stretch reads RTTKVTGDHP…FYAQCRRWLS (199 aa). Cysteines 434 and 481 form a disulfide. The tract at residues 442 to 509 is putative protease; it reads FHLDPRVLVF…ESYEGSDVDP (68 aa). The segment at 510–691 is zinc-binding; it reads AESAISDISG…FSPGHVWESA (182 aa). Zn(2+) contacts are provided by His-671, Glu-673, and His-686. The segment at 712–778 is hinge; it reads SSPTRPDLGF…AITHQTARHR (67 aa). The tract at residues 716–769 is disordered; sequence RPDLGFMSEPPIPSRAATPTLAAPLPPLAPDPSPPSSAPALDEPASAATSGVPA. Residues 739-752 are compositionally biased toward pro residues; that stretch reads PLPPLAPDPSPPSS. Residues 753 to 763 are compositionally biased toward low complexity; that stretch reads APALDEPASAA. The 147-residue stretch at 775–921 folds into the Macro domain; the sequence is ARHRRLLFTY…LYLPELAARW (147 aa). Residues 785-942 are X-domain; the sequence is PDGSKVFAGS…TITEDAARTA (158 aa). Positions 934–1082 constitute a (+)RNA virus helicase ATP-binding domain; the sequence is ITEDAARTAN…RPDLAPTSWW (149 aa). Residues 960–1204 form an NTPase/helicase region; that stretch reads GCRVTPGVVQ…ISDAIVNNFF (245 aa). 975–982 is a binding site for ATP; that stretch reads GVPGSGKS. Positions 1083–1216 constitute a (+)RNA virus helicase C-terminal domain; that stretch reads HVTHRCPADV…GGEIGHQRPS (134 aa). The interval 1207–1693 is RNA-directed RNA polymerase; the sequence is GGEIGHQRPS…LTNSILCRVE (487 aa). The RdRp catalytic domain maps to 1454–1565; that stretch reads SMVFENDFSE…LCSEYRQSPG (112 aa).

Belongs to the hepevirus non-structural polyprotein family. The protease domain interacts with host EIF2AK4 (via C-terminus); this interaction inhibits dimerization of EIF2AK4 and prevents EIF2AK4-mediated phosphorylation of host EIF2A. Requires Mg(2+) as cofactor. In terms of processing, ORF1 polyprotein does not seem to be processed into distinct enzymatic domains by a viral protease belonging to ORF1, but could be processed by a host serine protease like thrombin.

It is found in the host cytoplasm. It localises to the host perinuclear region. The enzyme catalyses RNA(n) + a ribonucleoside 5'-triphosphate = RNA(n+1) + diphosphate. The catalysed reaction is GTP + S-adenosyl-L-methionine = N(7)-methyl-GTP + S-adenosyl-L-homocysteine. Putative protease: Inhibited by chymostatin. In terms of biological role, methyltransferase: Displays a capping enzyme activity. This function is necessary since all viral RNAs are synthesized in the cytoplasm, and host capping enzymes are restricted to the nucleus. The enzymatic reaction involves a covalent link between 7-methyl-GMP and the methyltransferase, whereas eukaryotic capping enzymes form a covalent complex only with GMP. Methyltransferase catalyzes transfer of a methyl group from S-adenosylmethionine to GTP and GDP to yield m(7)GTP or m(7)GDP. GDP is a better substrate than GTP. This enzyme also displays guanylyltransferase activity to form a covalent complex, methyltransferase-m(7)GMP, from which 7-methyl-GMP is transferred to the mRNA to create the cap structure. Functionally, Y-domain: Indispensable for virus replication. Putative protease: The putative protease domain although necessary for replication of the virus may not be a protease but rather a structural Zn(2+)-binding domain. Inhibits induction of IFN-beta by MDA5 and RIG-I pathways and down-regulates the expression of MDA5. Its function is as follows. NTPase/helicase: Multi-functional protein that exhibits NTPase and RNA unwinding activities. Hydrolyzes all NTPs efficiently and unwinds RNA duplexes containing 5' overhangs. Possesses a sequence independent RNA-5'-triphosphatase (RTPase) activity suggestive of its role in forming viral cap structure. Also participates in viral genome replication, RNA translocation and genome packaging/unpackaging. In terms of biological role, RNA-directed RNA polymerase: Plays an essential role in the virus replication. Binds to the 3'-end of the genomic RNA to initiate viral replication. The chain is Non-structural polyprotein pORF1 from Bandicota bengalensis (lesser bandicoot rat).